We begin with the raw amino-acid sequence, 188 residues long: dCTP deaminase (188 aa).

DCTP-binding positions include 111–116, 135–137, Gln156, Tyr170, Lys179, and Gln180; these read KSTYAR and TLE. Glu137 acts as the Proton donor/acceptor in catalysis.

Belongs to the dCTP deaminase family. As to quaternary structure, homotrimer.

The catalysed reaction is dCTP + H2O + H(+) = dUTP + NH4(+). It participates in pyrimidine metabolism; dUMP biosynthesis; dUMP from dCTP (dUTP route): step 1/2. In terms of biological role, catalyzes the deamination of dCTP to dUTP. This chain is dCTP deaminase, found in Rickettsia felis (strain ATCC VR-1525 / URRWXCal2) (Rickettsia azadi).